Consider the following 130-residue polypeptide: Protein ApaG (130 aa).

Positions 3–127 (RAVTRHIEVT…FSLDSPDGKR (125 aa)) constitute an ApaG domain.

This is Protein ApaG from Bradyrhizobium sp. (strain ORS 278).